Here is a 173-residue protein sequence, read N- to C-terminus: Photosystem I assembly protein Ycf3 (173 aa).

3 TPR repeats span residues 35–68 (AFSYYRDGMSAQSEGEYAEALENYYEALKLEEDP), 72–105 (SYILYNIGLIYASNGEYVKALEYYHQGLELNFKL), and 120–153 (GVQAIEDKDTELSKLMFDKAAQYWQQAIKLAPDN).

Belongs to the Ycf3 family.

It localises to the plastid. Its subcellular location is the chloroplast thylakoid membrane. Its function is as follows. Essential for the assembly of the photosystem I (PSI) complex. May act as a chaperone-like factor to guide the assembly of the PSI subunits. The polypeptide is Photosystem I assembly protein Ycf3 (Pyropia yezoensis (Susabi-nori)).